The sequence spans 647 residues: MARPPPLLVQKPSFLVEACCSPSPATHLAPYHTQPGARTPSTIQRDLLFPIPRRCHARSSPRPPALGGGPTQRLQHAARSAHPIPPSVKEIHPTFSEIPRARASDCCAAALGVQHWPARHPHPPLPSISLAVDYYLLGQRWWFGLTLFFVVLGSLSVQVFSFRWFVHDFSTEDSATTTASTCQQPGADCKTVVSSGSAAGEGEARPSTPQRQASNASKSNIAATNSGSNSNGATRTSGKHRSASCSFCIWLLQSLIHILQLGQVWRYLHTIYLGIRSRQSGESSRWRFYWKMVYEYADVSMLHLLATFLESAPQLVLQLCIIVQTHSLQALQGFTAAASLVSLAWALASYQKALRDSRDDKKPISYMAVIIQFCWHFFTIAARVITFALFASVFQLYFGIFIVLHWCIMTFWIVHCETEFCITKWEEIVFDMVVGIIYIFSWFNVKEGRTRCRLFIYYFVILLENTALSALWYLYKAPQIADAFAIPALCVVFSSFLTGVVFMLMYYAFFHPNGPRFGQSPSCACDDPATAFSMPPEVATSTLRSISNNRSVASDRDQKFAERDGCVPVFQVRPTAPPTPSSRPPRIEESVIKIDLFRNRYPAWERHVLDRSLRKAILAFECSPSPPRLQYKDDALIQERLEYETTL.

A helical transmembrane segment spans residues 142-162; it reads WFGLTLFFVVLGSLSVQVFSF. A disordered region spans residues 193 to 238; that stretch reads VSSGSAAGEGEARPSTPQRQASNASKSNIAATNSGSNSNGATRTSG. At Ser197 the chain carries Phosphoserine. Positions 207–236 are enriched in polar residues; that stretch reads STPQRQASNASKSNIAATNSGSNSNGATRT. Transmembrane regions (helical) follow at residues 245-265, 328-348, 362-382, 393-415, 425-445, 454-474, and 484-504; these read CSFC…GQVW, LQAL…WALA, KPIS…TIAA, VFQL…WIVH, WEEI…WFNV, LFIY…LWYL, and FAIP…VFML.

The protein belongs to the XK family. In terms of assembly, homodimer; homodimerization takes place upon caspase cleavage. Interacts with the processed C-terminus of XRCC4 (protein XRCC4, C-terminus); interaction promotes the phospholipid scramblase activity. Post-translationally, undergoes proteolytic processing by caspase-3 (CASP3), caspase-6 (CASP6) and caspase-7 (CASP7) to generate the XK-related protein 4, processed form, leading to its activation.

It localises to the cell membrane. It carries out the reaction a 1,2-diacyl-sn-glycero-3-phospho-L-serine(in) = a 1,2-diacyl-sn-glycero-3-phospho-L-serine(out). With respect to regulation, phospholipid scramblase activity is activated upon caspase cleavage to generate the XK-related protein 4, processed form. Does not act prior the onset of apoptosis. Its activity is regulated as follows. Homodimerizes upon caspase cleavage. Phospholipid scramblase activity is activated following interaction with the processed C-terminus of XRCC4 (protein XRCC4, C-terminus). Functionally, phospholipid scramblase that promotes phosphatidylserine exposure on apoptotic cell surface. Phosphatidylserine is a specific marker only present at the surface of apoptotic cells and acts as a specific signal for engulfment. This chain is XK-related protein 4, found in Rattus norvegicus (Rat).